The following is a 125-amino-acid chain: Small ribosomal subunit protein uS13 (125 aa).

A disordered region spans residues 93 to 125 (RKGLPVRGQRTKTNARTRKGPKRTVAGKKKAGR).

This sequence belongs to the universal ribosomal protein uS13 family. Part of the 30S ribosomal subunit. Forms a loose heterodimer with protein S19. Forms two bridges to the 50S subunit in the 70S ribosome.

Functionally, located at the top of the head of the 30S subunit, it contacts several helices of the 16S rRNA. In the 70S ribosome it contacts the 23S rRNA (bridge B1a) and protein L5 of the 50S subunit (bridge B1b), connecting the 2 subunits; these bridges are implicated in subunit movement. Contacts the tRNAs in the A and P-sites. The protein is Small ribosomal subunit protein uS13 of Paenarthrobacter aurescens (strain TC1).